The primary structure comprises 131 residues: Profilin (131 aa).

It belongs to the profilin family. In terms of assembly, occurs in many kinds of cells as a complex with monomeric actin in a 1:1 ratio.

Its subcellular location is the cytoplasm. It localises to the cytoskeleton. Functionally, binds to actin and affects the structure of the cytoskeleton. At high concentrations, profilin prevents the polymerization of actin, whereas it enhances it at low concentrations. By binding to PIP2, it inhibits the formation of IP3 and DG. In Pyrus communis (Pear), this protein is Profilin.